The chain runs to 341 residues: tRNA N6-adenosine threonylcarbamoyltransferase (341 aa).

The Fe cation site is built by H111 and H115. Residues 134 to 138, D167, G180, and N270 each bind substrate; that span reads LVSGG. D298 provides a ligand contact to Fe cation.

Belongs to the KAE1 / TsaD family. Fe(2+) serves as cofactor.

It is found in the cytoplasm. It carries out the reaction L-threonylcarbamoyladenylate + adenosine(37) in tRNA = N(6)-L-threonylcarbamoyladenosine(37) in tRNA + AMP + H(+). In terms of biological role, required for the formation of a threonylcarbamoyl group on adenosine at position 37 (t(6)A37) in tRNAs that read codons beginning with adenine. Is involved in the transfer of the threonylcarbamoyl moiety of threonylcarbamoyl-AMP (TC-AMP) to the N6 group of A37, together with TsaE and TsaB. TsaD likely plays a direct catalytic role in this reaction. This is tRNA N6-adenosine threonylcarbamoyltransferase from Thiobacillus denitrificans (strain ATCC 25259 / T1).